Here is a 281-residue protein sequence, read N- to C-terminus: 39kDa core protein OPG130 (281 aa).

Over residues Met1 to Tyr22 the composition is skewed to polar residues. Disordered regions lie at residues Met1–Lys33, Leu93–Asp112, and Asn149–Pro188. Over residues Ser24–Lys33 the composition is skewed to basic and acidic residues. A compositionally biased stretch (polar residues) spans Pro94–Asp112. Positions Thr154–Ser175 are enriched in low complexity.

This sequence belongs to the orthopoxvirus OPG130 family. Interacts with OPG136 and its cleaved form. Its phosphorylation state is regulated by the OPG054 kinase and the OPG106 phosphatase.

It localises to the virion. Its subcellular location is the host endoplasmic reticulum-Golgi intermediate compartment membrane. In terms of biological role, component of the virion core. Participates in virion assembly. The sequence is that of 39kDa core protein OPG130 (OPG130) from Vaccinia virus (strain Western Reserve) (VACV).